We begin with the raw amino-acid sequence, 490 residues long: UDP-N-acetylmuramate--L-alanine ligase (490 aa).

126–132 (GTHGKTT) contacts ATP.

This sequence belongs to the MurCDEF family.

The protein resides in the cytoplasm. It catalyses the reaction UDP-N-acetyl-alpha-D-muramate + L-alanine + ATP = UDP-N-acetyl-alpha-D-muramoyl-L-alanine + ADP + phosphate + H(+). It participates in cell wall biogenesis; peptidoglycan biosynthesis. In terms of biological role, cell wall formation. The chain is UDP-N-acetylmuramate--L-alanine ligase from Baumannia cicadellinicola subsp. Homalodisca coagulata.